The sequence spans 498 residues: Probable malate:quinone oxidoreductase 2 (498 aa).

Belongs to the MQO family. It depends on FAD as a cofactor.

The enzyme catalyses (S)-malate + a quinone = a quinol + oxaloacetate. Its pathway is carbohydrate metabolism; tricarboxylic acid cycle; oxaloacetate from (S)-malate (quinone route): step 1/1. The chain is Probable malate:quinone oxidoreductase 2 from Staphylococcus epidermidis (strain ATCC 12228 / FDA PCI 1200).